We begin with the raw amino-acid sequence, 999 residues long: Ulvan lyase, long isoform (999 aa).

Positions M1–A21 are cleaved as a signal peptide. Residue S126–H127 participates in substrate binding. H127 (proton donor/acceptor) is an active-site residue. The Ca(2+) site is built by D189, D199, and K201. Substrate contacts are provided by Y280 and R297. D300, D303, and Y305 together coordinate Ca(2+). Y361 serves as a coordination point for substrate.

It belongs to the polysaccharide lyase 24 family.

Ulvan lyase involved in ulvan degradation. Ulvan is the main polysaccharide component of the Ulvales (green seaweed) cell wall. It is composed of disaccharide building blocks comprising 3-sulfated rhamnose (Rha3S) linked to D-glucuronic acid (GlcA), L-iduronic acid (IduA), or D-xylose (Xyl). Ulvan lyase catalyzes preferentially the endolytic cleavage of the glycosidic bond between Rha3S and the uronic acid GlcA, but not IduA, producing oligosaccharides that have unsaturated 4-deoxy-L-threo-hex-4-enopyranosiduronic acid (deltaUA) at the non-reducing end. The most abundant end products in the degradation of the ulvan polysaccharide were deltaUA-Rha3S disaccharides and deltaUA-Rha3S-IduA-Rha3S and deltaUA-Rha3S-Xyl-Rha3S tetrasaccharides. This Alteromonas sp protein is Ulvan lyase, long isoform.